A 184-amino-acid polypeptide reads, in one-letter code: Photosystem I assembly protein Ycf4 (184 aa).

2 helical membrane-spanning segments follow: residues 19-39 and 57-77; these read ISNF…LLVG and IIFF…LFIS.

This sequence belongs to the Ycf4 family.

The protein localises to the plastid. Its subcellular location is the chloroplast thylakoid membrane. Its function is as follows. Seems to be required for the assembly of the photosystem I complex. In Solanum bulbocastanum (Wild potato), this protein is Photosystem I assembly protein Ycf4.